The sequence spans 514 residues: Bifunctional purine biosynthesis protein PurH (514 aa).

The region spanning 1–143 (MTRRALISVS…KNHAGVLVLV (143 aa)) is the MGS-like domain.

It belongs to the PurH family.

The enzyme catalyses (6R)-10-formyltetrahydrofolate + 5-amino-1-(5-phospho-beta-D-ribosyl)imidazole-4-carboxamide = 5-formamido-1-(5-phospho-D-ribosyl)imidazole-4-carboxamide + (6S)-5,6,7,8-tetrahydrofolate. It catalyses the reaction IMP + H2O = 5-formamido-1-(5-phospho-D-ribosyl)imidazole-4-carboxamide. Its pathway is purine metabolism; IMP biosynthesis via de novo pathway; 5-formamido-1-(5-phospho-D-ribosyl)imidazole-4-carboxamide from 5-amino-1-(5-phospho-D-ribosyl)imidazole-4-carboxamide (10-formyl THF route): step 1/1. The protein operates within purine metabolism; IMP biosynthesis via de novo pathway; IMP from 5-formamido-1-(5-phospho-D-ribosyl)imidazole-4-carboxamide: step 1/1. The sequence is that of Bifunctional purine biosynthesis protein PurH from Deinococcus geothermalis (strain DSM 11300 / CIP 105573 / AG-3a).